The chain runs to 62 residues: Large ribosomal subunit protein uL30 (62 aa).

It belongs to the universal ribosomal protein uL30 family. As to quaternary structure, part of the 50S ribosomal subunit.

The sequence is that of Large ribosomal subunit protein uL30 from Roseobacter denitrificans (strain ATCC 33942 / OCh 114) (Erythrobacter sp. (strain OCh 114)).